Consider the following 90-residue polypeptide: MLVVWQKLPKERMRENDKENEREHVKRKIWSAAAPGNKCEERERCKEDEYIQYILAYSKLSAGSIAYSGITATRVKINMVTNDGFGSTVL.

This is an uncharacterized protein from Saccharomyces cerevisiae (strain ATCC 204508 / S288c) (Baker's yeast).